Consider the following 515-residue polypeptide: MKATGGPLPLILFLLIIIVLITAQHTAIAKPFFSLNAFAQGQPNDKDDQNMGKFYVYNKAQTNNYADQRMRKFYLYNKDQANDWDDQKMEKFYLYHEGKTNDRDDQKRKNIYLYNEGHANGDDQTMEKFYLFNKDQAKDGDDQKMGKFYLYNKDQANDWDDQKMERFYLYNKGHANEGDDQTMEKFYLYNKGHANEEDDQTMEKFYLYNKGQAKDGDDQKMEKNYLYNKDQANDWDDQKIEKFYLYHEGKANYRDDQNMEKFYLYKKGEEHKYIHSHGHGHVHFPEGAKDLYFFEDNLAPGSVLITRILSARQSSIFLHRNNSKHIPFSMKNITDILTMFSPVSATMADGIAATLQACEHTGMVHGEKAKCATSIESLLDVVVSSLGTKLVRALTPGAPMEGVPSLRYIVASATPVPNSQSMLACHDMLYPYKVFFCHTPKQTRLYQVSLVSGESGRPLIDGLLAVCHQNTSDWDTGHPFFHFMDVKPGETTACHFFGRGSIIWVPVPSVKEATQ.

The first 29 residues, 1 to 29 (MKATGGPLPLILFLLIIIVLITAQHTAIA), serve as a signal peptide directing secretion. Positions 292-507 (YFFEDNLAPG…GRGSIIWVPV (216 aa)) constitute a BURP domain. 3 N-linked (GlcNAc...) asparagine glycosylation sites follow: Asn-321, Asn-332, and Asn-470.

Expressed in shoot and panicles.

In Oryza sativa subsp. japonica (Rice), this protein is BURP domain-containing protein 9 (BURP9).